We begin with the raw amino-acid sequence, 164 residues long: Phosphopantetheine adenylyltransferase (164 aa).

Ser10 is a binding site for substrate. Residues 10–11 (SF) and His18 contribute to the ATP site. Substrate is bound by residues Lys42, Leu74, and Arg88. ATP is bound by residues 89 to 91 (GLR), Glu99, and 124 to 130 (YSFLSSS).

This sequence belongs to the bacterial CoaD family. Homohexamer. Requires Mg(2+) as cofactor.

Its subcellular location is the cytoplasm. It catalyses the reaction (R)-4'-phosphopantetheine + ATP + H(+) = 3'-dephospho-CoA + diphosphate. It participates in cofactor biosynthesis; coenzyme A biosynthesis; CoA from (R)-pantothenate: step 4/5. Functionally, reversibly transfers an adenylyl group from ATP to 4'-phosphopantetheine, yielding dephospho-CoA (dPCoA) and pyrophosphate. The sequence is that of Phosphopantetheine adenylyltransferase from Exiguobacterium sibiricum (strain DSM 17290 / CCUG 55495 / CIP 109462 / JCM 13490 / 255-15).